An 82-amino-acid chain; its full sequence is Putative membrane protein insertion efficiency factor (82 aa).

The protein belongs to the UPF0161 family.

Its subcellular location is the cell inner membrane. Functionally, could be involved in insertion of integral membrane proteins into the membrane. The polypeptide is Putative membrane protein insertion efficiency factor (Thermus thermophilus (strain ATCC BAA-163 / DSM 7039 / HB27)).